Here is a 572-residue protein sequence, read N- to C-terminus: Flagellin B (572 aa).

The protein belongs to the bacterial flagellin family. As to quaternary structure, heteromer of flaA and flaB.

The protein resides in the secreted. Its subcellular location is the bacterial flagellum. Functionally, flagellin is the subunit protein which polymerizes to form the filaments of bacterial flagella. The protein is Flagellin B (flaB) of Campylobacter jejuni subsp. jejuni serotype O:2 (strain ATCC 700819 / NCTC 11168).